The following is a 279-amino-acid chain: Phosphate import ATP-binding protein PstB (279 aa).

Positions 33 to 274 (LDINKLNLFY…PLKKKTEDYI (242 aa)) constitute an ABC transporter domain. Position 65-72 (65-72 (GPSGCGKS)) interacts with ATP.

The protein belongs to the ABC transporter superfamily. Phosphate importer (TC 3.A.1.7) family. The complex is composed of two ATP-binding proteins (PstB), two transmembrane proteins (PstC and PstA) and a solute-binding protein (PstS).

The protein resides in the cell inner membrane. It carries out the reaction phosphate(out) + ATP + H2O = ADP + 2 phosphate(in) + H(+). Part of the ABC transporter complex PstSACB involved in phosphate import. Responsible for energy coupling to the transport system. This chain is Phosphate import ATP-binding protein PstB, found in Colwellia psychrerythraea (strain 34H / ATCC BAA-681) (Vibrio psychroerythus).